The sequence spans 330 residues: Tyrosine-protein phosphatase yvh1 (330 aa).

In terms of domain architecture, Tyrosine-protein phosphatase spans Asn-45–Gln-187. Cys-131 acts as the Phosphocysteine intermediate in catalysis.

It belongs to the protein-tyrosine phosphatase family. Non-receptor class dual specificity subfamily.

It is found in the cytoplasm. Its subcellular location is the nucleus. The enzyme catalyses O-phospho-L-tyrosyl-[protein] + H2O = L-tyrosyl-[protein] + phosphate. Functionally, may be directly involved in signal transduction and/or cell cycle regulation. It is necessary for maintaining growth rate or spore germination. Could show both activity toward tyrosine-protein phosphate as well as with serine-protein phosphate. The polypeptide is Tyrosine-protein phosphatase yvh1 (yvh1) (Schizosaccharomyces pombe (strain 972 / ATCC 24843) (Fission yeast)).